The sequence spans 156 residues: Small ribosomal subunit protein uS7 (156 aa).

It belongs to the universal ribosomal protein uS7 family. In terms of assembly, part of the 30S ribosomal subunit. Contacts proteins S9 and S11.

In terms of biological role, one of the primary rRNA binding proteins, it binds directly to 16S rRNA where it nucleates assembly of the head domain of the 30S subunit. Is located at the subunit interface close to the decoding center, probably blocks exit of the E-site tRNA. The chain is Small ribosomal subunit protein uS7 from Pectobacterium carotovorum subsp. carotovorum (strain PC1).